Consider the following 409-residue polypeptide: Tryptophan synthase beta chain 1 (409 aa).

An N6-(pyridoxal phosphate)lysine modification is found at Lys-104.

The protein belongs to the TrpB family. As to quaternary structure, tetramer of two alpha and two beta chains. Pyridoxal 5'-phosphate serves as cofactor.

It catalyses the reaction (1S,2R)-1-C-(indol-3-yl)glycerol 3-phosphate + L-serine = D-glyceraldehyde 3-phosphate + L-tryptophan + H2O. It functions in the pathway amino-acid biosynthesis; L-tryptophan biosynthesis; L-tryptophan from chorismate: step 5/5. Its function is as follows. The beta subunit is responsible for the synthesis of L-tryptophan from indole and L-serine. The protein is Tryptophan synthase beta chain 1 (trpB1) of Nostoc sp. (strain PCC 7120 / SAG 25.82 / UTEX 2576).